The primary structure comprises 61 residues: Large ribosomal subunit protein uL29 (61 aa).

It belongs to the universal ribosomal protein uL29 family.

This chain is Large ribosomal subunit protein uL29, found in Stenotrophomonas maltophilia (strain R551-3).